Here is a 696-residue protein sequence, read N- to C-terminus: Probable E3 ubiquitin ligase complex SCF subunit sconB (696 aa).

The span at 1–12 (MDAHELSFRDGH) shows a compositional bias: basic and acidic residues. A disordered region spans residues 1–72 (MDAHELSFRD…HSFNTQKPIR (72 aa)). Residues 55–69 (PGSTQDKPHSFNTQK) are compositionally biased toward polar residues. Residues 193-239 (IDFLTALPPEISFKILCYLDTTSLCKAAQVSRRWRALADDDVVWHRM) enclose the F-box domain. The interval 290 to 314 (SATIETAAAGSKRKPESGKEDTAMV) is disordered. Residues 302–313 (RKPESGKEDTAM) show a composition bias toward basic and acidic residues. 7 WD repeats span residues 365–402 (GHSNGIMCLQFEDNILATGSYDATIKIWDTETGEELRT), 405–444 (GHQSGIRCLQFDDTKLISGSMDHTLKVWNWRTGECISTYS), 446–482 (HRGGVVGLHFDATILASGSVDKTVKIWNFEDKSTCLL), 484–525 (GHTD…RTFH), 579–622 (DTPS…CLRT), 623–662 (FFGHLEGVWALAADTLRIVSGAEDRMVKIWDPRTGKCERT), and 665–696 (GHSGPVTCIGLGDSRFATGSEDCEVRMYSFQT). Residues 554-596 (NVSVTSGDSPAASPQALPGFDGQTSDTPSSAFGPAFDDGRPSP) form a disordered region.

The protein belongs to the WD repeat MET30/SCONB/SCON-2 family. As to quaternary structure, component of the SCF(sconB) E3 ubiquitin ligase complex.

It participates in protein modification; protein ubiquitination. In terms of biological role, component of the SCF(sconB) E3 ubiquitin ligase complex involved in the regulation of sulfur metabolite repression, probably by mediating the inactivation or degradation of the metR transcription factor. In Aspergillus fumigatus (strain ATCC MYA-4609 / CBS 101355 / FGSC A1100 / Af293) (Neosartorya fumigata), this protein is Probable E3 ubiquitin ligase complex SCF subunit sconB (sconB).